The sequence spans 242 residues: Carboxy-S-adenosyl-L-methionine synthase (242 aa).

S-adenosyl-L-methionine is bound by residues Y39, 64-66, 89-90, 117-118, N132, and R199; these read GCS, DN, and DI.

Belongs to the class I-like SAM-binding methyltransferase superfamily. Cx-SAM synthase family. Homodimer.

It carries out the reaction prephenate + S-adenosyl-L-methionine = carboxy-S-adenosyl-L-methionine + 3-phenylpyruvate + H2O. In terms of biological role, catalyzes the conversion of S-adenosyl-L-methionine (SAM) to carboxy-S-adenosyl-L-methionine (Cx-SAM). The chain is Carboxy-S-adenosyl-L-methionine synthase from Psychromonas ingrahamii (strain DSM 17664 / CCUG 51855 / 37).